A 485-amino-acid chain; its full sequence is Alpha,alpha-trehalose-phosphate synthase [UDP-forming] (485 aa).

Residues Tyr-99 and Asp-153 each contribute to the D-glucose 6-phosphate site. Residues Arg-290 and Lys-295 each contribute to the UDP site. Positions 290 and 295 each coordinate UDP-alpha-D-glucose. Arg-328 contributes to the D-glucose 6-phosphate binding site. UDP contacts are provided by residues Ile-367 and 393 to 397 (LVSYE). Residues Ile-367 and 389–397 (DGMNLVSYE) contribute to the UDP-alpha-D-glucose site.

The protein belongs to the glycosyltransferase 20 family.

It carries out the reaction D-glucose 6-phosphate + UDP-alpha-D-glucose = alpha,alpha-trehalose 6-phosphate + UDP + H(+). It functions in the pathway carbohydrate biosynthesis. Functionally, synthase catalytic subunit of the trehalose synthase complex that catalyzes the production of trehalose from glucose-6-phosphate and UDP-alpha-D-glucose in a two step process. The sequence is that of Alpha,alpha-trehalose-phosphate synthase [UDP-forming] from Zygosaccharomyces rouxii.